The chain runs to 1317 residues: Clustered mitochondria protein homolog (1317 aa).

In terms of domain architecture, Clu spans 382 to 626; it reads DITRSQESYL…RVTPLDVTWQ (245 aa). The span at 669 to 689 shows a compositional bias: basic and acidic residues; that stretch reads KAQEEAANKEQSSEVTESKEQ. 2 disordered regions span residues 669 to 700 and 939 to 966; these read KAQEEAANKEQSSEVTESKEQESEEKAEEALD and ANGVNGASHDEGKKKKKKGGDSKSPSRA. TPR repeat units follow at residues 1040–1073, 1082–1115, and 1124–1157; these read AKLYHQLSMLYYQTDEKEAAVELARKAVIVTERT, ILAYLNLSLFEHASGNTKAALVYIKHAMDLWKII, and ITTMNNAAVMLQHLKQYSDSRKWFEASLAVCESL. Disordered regions lie at residues 1252 to 1273 and 1288 to 1317; these read VQPQVGQTAPEASGAKGAANAS and GGDATSSRSKQKKRAAASNPKLRGSKKSSA.

The protein belongs to the CLU family. As to quaternary structure, may associate with the eukaryotic translation initiation factor 3 (eIF-3) complex.

Its subcellular location is the cytoplasm. MRNA-binding protein involved in proper cytoplasmic distribution of mitochondria. The chain is Clustered mitochondria protein homolog from Neosartorya fischeri (strain ATCC 1020 / DSM 3700 / CBS 544.65 / FGSC A1164 / JCM 1740 / NRRL 181 / WB 181) (Aspergillus fischerianus).